We begin with the raw amino-acid sequence, 403 residues long: Imidazolonepropionase (403 aa).

His-69 and His-71 together coordinate Fe(3+). Zn(2+)-binding residues include His-69 and His-71. 4-imidazolone-5-propanoate contacts are provided by Arg-78, Tyr-141, and His-174. An N-formimidoyl-L-glutamate-binding site is contributed by Tyr-141. His-239 contributes to the Fe(3+) binding site. Residue His-239 coordinates Zn(2+). Residue Gln-242 participates in 4-imidazolone-5-propanoate binding. Asp-314 lines the Fe(3+) pocket. Asp-314 is a Zn(2+) binding site. 2 residues coordinate N-formimidoyl-L-glutamate: Asn-316 and Gly-318. Ser-319 is a binding site for 4-imidazolone-5-propanoate.

Belongs to the metallo-dependent hydrolases superfamily. HutI family. Requires Zn(2+) as cofactor. Fe(3+) serves as cofactor.

It localises to the cytoplasm. It catalyses the reaction 4-imidazolone-5-propanoate + H2O = N-formimidoyl-L-glutamate. Its pathway is amino-acid degradation; L-histidine degradation into L-glutamate; N-formimidoyl-L-glutamate from L-histidine: step 3/3. Catalyzes the hydrolytic cleavage of the carbon-nitrogen bond in imidazolone-5-propanoate to yield N-formimidoyl-L-glutamate. It is the third step in the universal histidine degradation pathway. This is Imidazolonepropionase from Legionella pneumophila (strain Paris).